The primary structure comprises 173 residues: Ribosome maturation factor RimM (173 aa).

The PRC barrel domain maps to 98–170 (EGEFYWCDLI…IMTVSPTEGL (73 aa)).

This sequence belongs to the RimM family. As to quaternary structure, binds ribosomal protein uS19.

Its subcellular location is the cytoplasm. In terms of biological role, an accessory protein needed during the final step in the assembly of 30S ribosomal subunit, possibly for assembly of the head region. Essential for efficient processing of 16S rRNA. May be needed both before and after RbfA during the maturation of 16S rRNA. It has affinity for free ribosomal 30S subunits but not for 70S ribosomes. This chain is Ribosome maturation factor RimM, found in Geobacter metallireducens (strain ATCC 53774 / DSM 7210 / GS-15).